The primary structure comprises 704 residues: Elongation factor G (704 aa).

The 277-residue stretch at 10 to 286 (KKVRNIGIMA…AVIDFLPNPM (277 aa)) folds into the tr-type G domain. Residues 19–26 (AHIDAGKT), 83–87 (DTPGH), and 137–140 (NKMD) contribute to the GTP site.

This sequence belongs to the TRAFAC class translation factor GTPase superfamily. Classic translation factor GTPase family. EF-G/EF-2 subfamily.

The protein resides in the cytoplasm. Functionally, catalyzes the GTP-dependent ribosomal translocation step during translation elongation. During this step, the ribosome changes from the pre-translocational (PRE) to the post-translocational (POST) state as the newly formed A-site-bound peptidyl-tRNA and P-site-bound deacylated tRNA move to the P and E sites, respectively. Catalyzes the coordinated movement of the two tRNA molecules, the mRNA and conformational changes in the ribosome. The sequence is that of Elongation factor G from Corynebacterium jeikeium (strain K411).